A 221-amino-acid polypeptide reads, in one-letter code: VDLDDQGERTFTFMVRPSADLFLVEEDLPQFAAGQWLHVCSIALSAEPSRSTTFAAMESIRSAGGRVSFDPNIRPDLWQDQALLLACLDRALHMANVVKLSEEELVFISSSNDLAYGIASVTERYQPELLLVTRGKAGVLAAFQQKFTHFNARPVASVDTTGAGDAFVAGLLASLAANGMPTDMTALEPTLTLAQTCGALATTAKGAMTALPYQRDLNRQF.

Belongs to the carbohydrate kinase PfkB family.

It carries out the reaction D-fructose + ATP = D-fructose 6-phosphate + ADP + H(+). In Salmonella thompson, this protein is Fructokinase (scrK).